Consider the following 136-residue polypeptide: uncharacterized protein (136 aa).

2 helical membrane-spanning segments follow: residues 36–56 (FLLT…IYLI) and 63–83 (FAFA…LFLS).

It is found in the cell membrane. This is an uncharacterized protein from Mycoplasma pneumoniae (strain ATCC 29342 / M129 / Subtype 1) (Mycoplasmoides pneumoniae).